The primary structure comprises 426 residues: Tol-Pal system protein TolB (426 aa).

Positions 1–25 are cleaved as a signal peptide; it reads MNAMSRISRRIFLALALSLAGLAQA.

It belongs to the TolB family. The Tol-Pal system is composed of five core proteins: the inner membrane proteins TolA, TolQ and TolR, the periplasmic protein TolB and the outer membrane protein Pal. They form a network linking the inner and outer membranes and the peptidoglycan layer.

Its subcellular location is the periplasm. Part of the Tol-Pal system, which plays a role in outer membrane invagination during cell division and is important for maintaining outer membrane integrity. This is Tol-Pal system protein TolB from Dechloromonas aromatica (strain RCB).